A 302-amino-acid chain; its full sequence is Recombination-associated protein RdgC (302 aa).

It belongs to the RdgC family.

The protein resides in the cytoplasm. It is found in the nucleoid. Functionally, may be involved in recombination. The chain is Recombination-associated protein RdgC from Xylella fastidiosa (strain M12).